The sequence spans 271 residues: Phosphatidylglycerol--prolipoprotein diacylglyceryl transferase (271 aa).

Transmembrane regions (helical) follow at residues 10–30, 56–76, 92–112, 120–140, 174–194, 202–222, and 237–257; these read VALA…LVGI, LVFW…VLFY, WKGG…ALWF, FFQL…AGRI, PSQL…LWLF, MAVS…VEFV, and LTMG…LIWL. R139 lines the a 1,2-diacyl-sn-glycero-3-phospho-(1'-sn-glycerol) pocket.

This sequence belongs to the Lgt family.

Its subcellular location is the cell inner membrane. The enzyme catalyses L-cysteinyl-[prolipoprotein] + a 1,2-diacyl-sn-glycero-3-phospho-(1'-sn-glycerol) = an S-1,2-diacyl-sn-glyceryl-L-cysteinyl-[prolipoprotein] + sn-glycerol 1-phosphate + H(+). Its pathway is protein modification; lipoprotein biosynthesis (diacylglyceryl transfer). Its function is as follows. Catalyzes the transfer of the diacylglyceryl group from phosphatidylglycerol to the sulfhydryl group of the N-terminal cysteine of a prolipoprotein, the first step in the formation of mature lipoproteins. In Pseudomonas fluorescens (strain Pf0-1), this protein is Phosphatidylglycerol--prolipoprotein diacylglyceryl transferase.